Consider the following 209-residue polypeptide: MKNLLKKSLLGLAFLSLNGFAFADAQAVAELQQRLDKAMQYSADFEQTVRSSKGKEIQKGQGKFQVKRPNLFRMDTQSPQENLIVSDGKTLWFYDPFVSQVTANWVKDAVSNTPFVLLTSNDKSHWDQYDVTQNVDNFVLKPKSKKSAIKQFDIRIDATGLVKGFSTIERDGQSNLYVLRNISTAHLSESLFSFSVPKGAELDDQRGKK.

Positions M1–A23 are cleaved as a signal peptide.

The protein belongs to the LolA family. Monomer.

It is found in the periplasm. Participates in the translocation of lipoproteins from the inner membrane to the outer membrane. Only forms a complex with a lipoprotein if the residue after the N-terminal Cys is not an aspartate (The Asp acts as a targeting signal to indicate that the lipoprotein should stay in the inner membrane). The sequence is that of Outer-membrane lipoprotein carrier protein from Glaesserella parasuis serovar 5 (strain SH0165) (Haemophilus parasuis).